A 90-amino-acid chain; its full sequence is Small ribosomal subunit protein bS20 (90 aa).

Residues 1–25 (MANSAQARKRARQAAKANSHNSALR) form a disordered region.

Belongs to the bacterial ribosomal protein bS20 family.

Its function is as follows. Binds directly to 16S ribosomal RNA. In Burkholderia orbicola (strain MC0-3), this protein is Small ribosomal subunit protein bS20.